The following is a 1004-amino-acid chain: NADH:acrylate oxidoreductase (1004 aa).

T455 is subject to FMN phosphoryl threonine. FAD contacts are provided by A508, E527, N535, T536, G540, G541, and D775. The active-site Proton donor is the R834. The FAD site is built by H941, E970, A985, and L986.

Belongs to the FAD-dependent oxidoreductase 2 family. FRD/SDH subfamily. The cofactor is FAD. FMN serves as cofactor. In terms of processing, is flavinylated on Thr-455 by ApbE, encoded in a neighboring gene. Flavinylation is essential for catalytic activity.

The enzyme catalyses acrylate + NADH + H(+) = propanoate + NAD(+). Its function is as follows. Catalyzes the NADH-dependent reduction of acrylate to propanoate. The principal role of ARD in Vibrio seems to be the energy-saving detoxification of acrylate coming from the environment. May also use acrylate as the terminal electron acceptor for NADH regeneration at oxygen deficiency. NADPH cannot replace NADH as the electron donor. Is also able to reduce methacrylate in vitro, but with a much lower efficiency. The chain is NADH:acrylate oxidoreductase from Vibrio harveyi (Beneckea harveyi).